We begin with the raw amino-acid sequence, 374 residues long: Probable trehalose-phosphate phosphatase 9 (374 aa).

Belongs to the trehalose phosphatase family. The cofactor is a divalent metal cation.

It catalyses the reaction alpha,alpha-trehalose 6-phosphate + H2O = alpha,alpha-trehalose + phosphate. It participates in glycan biosynthesis; trehalose biosynthesis. Its function is as follows. Removes the phosphate from trehalose 6-phosphate to produce free trehalose. Trehalose accumulation in plant may improve abiotic stress tolerance. The chain is Probable trehalose-phosphate phosphatase 9 (TPP9) from Oryza sativa subsp. japonica (Rice).